Here is a 124-residue protein sequence, read N- to C-terminus: Small ribosomal subunit protein uS12 (124 aa).

Position 89 is a 3-methylthioaspartic acid (Asp-89). Residues 104-124 (TAGVENRKQSRSKYGAKRPKK) form a disordered region. Residues 112 to 124 (QSRSKYGAKRPKK) show a composition bias toward basic residues.

It belongs to the universal ribosomal protein uS12 family. In terms of assembly, part of the 30S ribosomal subunit. Contacts proteins S8 and S17. May interact with IF1 in the 30S initiation complex.

With S4 and S5 plays an important role in translational accuracy. In terms of biological role, interacts with and stabilizes bases of the 16S rRNA that are involved in tRNA selection in the A site and with the mRNA backbone. Located at the interface of the 30S and 50S subunits, it traverses the body of the 30S subunit contacting proteins on the other side and probably holding the rRNA structure together. The combined cluster of proteins S8, S12 and S17 appears to hold together the shoulder and platform of the 30S subunit. The polypeptide is Small ribosomal subunit protein uS12 (Pseudothermotoga lettingae (strain ATCC BAA-301 / DSM 14385 / NBRC 107922 / TMO) (Thermotoga lettingae)).